Here is a 102-residue protein sequence, read N- to C-terminus: NADH-quinone oxidoreductase subunit K (102 aa).

The next 3 membrane-spanning stretches (helical) occupy residues 6-26 (MEHG…GLMV), 30-50 (ILFI…AFVV), and 62-82 (VMFI…LAIL).

It belongs to the complex I subunit 4L family. In terms of assembly, NDH-1 is composed of 13 different subunits. Subunits NuoA, H, J, K, L, M, N constitute the membrane sector of the complex.

It is found in the cell inner membrane. The enzyme catalyses a quinone + NADH + 5 H(+)(in) = a quinol + NAD(+) + 4 H(+)(out). NDH-1 shuttles electrons from NADH, via FMN and iron-sulfur (Fe-S) centers, to quinones in the respiratory chain. The immediate electron acceptor for the enzyme in this species is believed to be ubiquinone. Couples the redox reaction to proton translocation (for every two electrons transferred, four hydrogen ions are translocated across the cytoplasmic membrane), and thus conserves the redox energy in a proton gradient. The chain is NADH-quinone oxidoreductase subunit K from Ectopseudomonas mendocina (strain ymp) (Pseudomonas mendocina).